Reading from the N-terminus, the 107-residue chain is Ribonuclease P protein component 4 (107 aa).

Zn(2+) contacts are provided by C62, C65, C87, and C90.

This sequence belongs to the eukaryotic/archaeal RNase P protein component 4 family. As to quaternary structure, consists of a catalytic RNA component and at least 4-5 protein subunits. Zn(2+) is required as a cofactor.

The protein localises to the cytoplasm. It catalyses the reaction Endonucleolytic cleavage of RNA, removing 5'-extranucleotides from tRNA precursor.. Its function is as follows. Part of ribonuclease P, a protein complex that generates mature tRNA molecules by cleaving their 5'-ends. This Archaeoglobus fulgidus (strain ATCC 49558 / DSM 4304 / JCM 9628 / NBRC 100126 / VC-16) protein is Ribonuclease P protein component 4.